The sequence spans 312 residues: Zygote arrest protein 1.L (312 aa).

Disordered stretches follow at residues 79-133 and 150-205; these read RDVG…VRFP and FQDK…DQTR. Composition is skewed to polar residues over residues 86–95 and 113–128; these read NPRQDASVQC and PQQS…SPTK. Over residues 152–196 the composition is skewed to basic and acidic residues; that stretch reads DKGENLSEKTEALRSEGSRGEGGRPEGKQEDGEIKEQTKMDKADQ. The 3CxxC-type zinc-finger motif lies at 214–297; it reads KYGYYHCKDC…RQDLCGRCKG (84 aa).

It belongs to the ZAR1 family. As to expression, ovary.

The protein resides in the cytoplasm. It is found in the cytoplasmic ribonucleoprotein granule. MRNA-binding protein required for maternal mRNA storage, translation and degradation during oocyte maturation. Probably promotes formation of some phase-separated membraneless compartment that stores maternal mRNAs in oocytes: acts by undergoing liquid-liquid phase separation upon binding to maternal mRNAs. Binds to the 3'-UTR of maternal mRNAs in immature oocytes, inhibiting their translation. The sequence is that of Zygote arrest protein 1.L from Xenopus laevis (African clawed frog).